A 138-amino-acid polypeptide reads, in one-letter code: Histone H3-like centromeric protein A (138 aa).

The tract at residues 1–40 (MGPRRQKRKPETPRRRPASPAPAAPRPTPSLGTSSRPLAR) is disordered. Gly2 is modified (n,N,N-trimethylglycine). Ser19 carries the post-translational modification Phosphoserine. Residues 19–28 (SPAPAAPRPT) show a composition bias toward pro residues. Residues 37-52 (PLARRRHTVLKEIRTL) are important for flexibility of DNA ends that protrude from nucleosomes. The segment at 39-138 (ARRRHTVLKE…RIRGIQEGLG (100 aa)) is H3-like. Positions 73–114 (CVQFTRGVDFNWQAQALLALQEAAEAFLVHLFEDAYLLSLHA) are CATD.

It belongs to the histone H3 family. In terms of assembly, component of centromeric nucleosomes, where DNA is wrapped around a histone octamer core. The octamer contains two molecules each of H2A, H2B, CENPA and H4 assembled in one CENPA-H4 heterotetramer and two H2A-H2B heterodimers. CENPA modulates the DNA-binding characteristics of nucleosomes so that protruding DNA ends have higher flexibility than in nucleosomes containing conventional histone H3. Inhibits binding of histone H1 to nucleosomes, since histone H1 binds preferentially to rigid DNA linkers that protrude from nucleosomes. Nucleosomes containing CENPA also contain histone H2A variants such as MACROH2A and H2A.Z/H2AZ1. The CENPA-H4 heterotetramer is more compact and structurally more rigid than corresponding H3-H4 heterotetramers. Can assemble into nucleosomes that contain both CENPA and histone H3.3; these nucleosomes interact with a single CENPC chain. Heterotrimer composed of HJURP, CENPA and histone H4, where HJURP interacts with the dimer formed by CENPA and histone H4 and prevents tetramerization of CENPA and H4. Component of the CENPA-NAC complex, at least composed of CENPA, CENPC, CENPH, CENPM, CENPN, CENPT and CENPU. Interacts (via CATD domain) with HJURP; the interaction is direct and is required for its localization to centromeres. Interacts with CENPC, CENPN and CENPT; interaction is direct. Part of a centromere complex consisting of CENPA, CENPT and CENPW. Identified in centromere complexes containing histones H2A, H2B and H4, and at least CENPA, CENPB, CENPC, CENPT, CENPN, HJURP, SUPT16H, SSRP1 and RSF1. Can self-associate. The CENPA-H4 heterotetramer can bind DNA by itself (in vitro). Interacts with CDK1, PPP1CA and RBBP7. Post-translationally, trimethylated by NTMT1 at the N-terminal glycine after cleavage of Met-1. Methylation is low before incorporation into nucleosomes and increases with cell cycle progression, with the highest levels in mitotic nucleosomes. Poly-ADP-ribosylated by PARP1.

It localises to the nucleus. It is found in the chromosome. The protein localises to the centromere. Its function is as follows. Histone H3-like nucleosomal protein that is specifically found in centromeric nucleosomes. Replaces conventional H3 in the nucleosome core of centromeric chromatin that serves as an assembly site for the inner kinetochore. The presence of CENPA subtly modifies the nucleosome structure and the way DNA is wrapped around the nucleosome and gives rise to protruding DNA ends that are less well-ordered and rigid compared to nucleosomes containing histone H3. May serve as an epigenetic mark that propagates centromere identity through replication and cell division. Required for recruitment and assembly of kinetochore proteins, and as a consequence required for progress through mitosis, chromosome segregation and cytokinesis. The chain is Histone H3-like centromeric protein A (CENPA) from Bos taurus (Bovine).